A 718-amino-acid chain; its full sequence is K(+)-insensitive pyrophosphate-energized proton pump (718 aa).

Transmembrane regions (helical) follow at residues 6-26 (AVLV…IWAI), 61-81 (IAIV…LNAA), 83-103 (GFLI…HVSV), 112-132 (AASL…AITG), 133-153 (LLVA…LTVW), and 168-188 (VSLG…GGIF). K190 provides a ligand contact to substrate. Residues D193, D197, N220, and D223 each coordinate Mg(2+). The next 6 membrane-spanning stretches (helical) occupy residues 235–255 (LFET…IFFH), 265–285 (LYPL…TFFV), 300–320 (GLIA…TLTV), 335–355 (GTNL…IVVI), 385–405 (GLAV…GGII), and 413–433 (LFGT…IVAL). Mg(2+) is bound at residue D441. A run of 4 helical transmembrane segments spans residues 472-492 (AVTK…LFAA), 524-544 (YVVA…GMAM), 593-613 (IIPS…VLLI), and 620-640 (AFAA…FVAI). Residues D650, D682, and D686 each contribute to the Ca(2+) site. Residue K689 coordinates substrate. A helical membrane pass occupies residues 695 to 715 (AVNPAIKITNIVALLLLAVLA).

This sequence belongs to the H(+)-translocating pyrophosphatase (TC 3.A.10) family. K(+)-insensitive subfamily. As to quaternary structure, homodimer. The cofactor is Mg(2+).

It localises to the cell inner membrane. It carries out the reaction diphosphate + H2O + H(+)(in) = 2 phosphate + 2 H(+)(out). In terms of biological role, proton pump that utilizes the energy of pyrophosphate hydrolysis as the driving force for proton movement across the membrane. Generates a proton motive force. This chain is K(+)-insensitive pyrophosphate-energized proton pump, found in Brucella melitensis biotype 1 (strain ATCC 23456 / CCUG 17765 / NCTC 10094 / 16M).